The primary structure comprises 514 residues: Peptide chain release factor 3 (514 aa).

The tr-type G domain maps to Lys8–His268. GTP contacts are provided by residues Ser17 to Thr24, Asp85 to His89, and Asn139 to Asp142.

Belongs to the TRAFAC class translation factor GTPase superfamily. Classic translation factor GTPase family. PrfC subfamily.

Its subcellular location is the cytoplasm. Functionally, increases the formation of ribosomal termination complexes and stimulates activities of RF-1 and RF-2. It binds guanine nucleotides and has strong preference for UGA stop codons. It may interact directly with the ribosome. The stimulation of RF-1 and RF-2 is significantly reduced by GTP and GDP, but not by GMP. This chain is Peptide chain release factor 3, found in Streptococcus pneumoniae (strain 70585).